Reading from the N-terminus, the 441-residue chain is Amino-acid acetyltransferase (441 aa).

An N-acetyltransferase domain is found at 295 to 434; sequence EQVRRATIND…QALYNYQRRS (140 aa).

This sequence belongs to the acetyltransferase family. ArgA subfamily. As to quaternary structure, homohexamer.

The protein resides in the cytoplasm. It catalyses the reaction L-glutamate + acetyl-CoA = N-acetyl-L-glutamate + CoA + H(+). Its pathway is amino-acid biosynthesis; L-arginine biosynthesis; N(2)-acetyl-L-ornithine from L-glutamate: step 1/4. The chain is Amino-acid acetyltransferase from Pectobacterium carotovorum subsp. carotovorum (strain PC1).